The following is a 1057-amino-acid chain: mRNA export factor elf1 (1057 aa).

2 consecutive ABC transporter domains span residues 440–659 (IEEE…VKPE) and 692–1019 (LKMT…KKKL). ATP contacts are provided by residues 477-484 (GHNGCGKS) and 726-733 (GPNGAGKS). Phosphoserine is present on Ser733. The region spanning 820 to 869 (RRVEALIGRQKLKKSFQYEIKWFGKPHKYNTWVSREILLENGFQKFVQAF) is the Chromo domain. Over residues 1020 to 1036 (TRNEIKAKERRAREREL) the composition is skewed to basic and acidic residues. The tract at residues 1020–1057 (TRNEIKAKERRARERELAWLQSPKGTEKPKSFFSDDEE) is disordered. Phosphoserine is present on residues Ser1041 and Ser1053.

This sequence belongs to the ABC transporter superfamily. ABCF family. EF3 subfamily.

The protein resides in the cytoplasm. It localises to the nucleus. Its function is as follows. Has a direct role in the mRNA export process. Appears to act within the rae1 mediated mRNA export pathway. This Schizosaccharomyces pombe (strain 972 / ATCC 24843) (Fission yeast) protein is mRNA export factor elf1 (elf1).